Consider the following 95-residue polypeptide: Endoribonuclease VapD homolog (95 aa).

This sequence belongs to the VapD ribonuclease family. In terms of assembly, homodimer.

In terms of biological role, cleaves ssRNA, mostly between U:A. The protein is Endoribonuclease VapD homolog of Helicobacter pylori (strain ATCC 700392 / 26695) (Campylobacter pylori).